Here is a 182-residue protein sequence, read N- to C-terminus: Large ribosomal subunit protein uL5 (182 aa).

Belongs to the universal ribosomal protein uL5 family. As to quaternary structure, part of the 50S ribosomal subunit; part of the 5S rRNA/L5/L18/L25 subcomplex. Contacts the 5S rRNA and the P site tRNA. Forms a bridge to the 30S subunit in the 70S ribosome.

Its function is as follows. This is one of the proteins that bind and probably mediate the attachment of the 5S RNA into the large ribosomal subunit, where it forms part of the central protuberance. In the 70S ribosome it contacts protein S13 of the 30S subunit (bridge B1b), connecting the 2 subunits; this bridge is implicated in subunit movement. Contacts the P site tRNA; the 5S rRNA and some of its associated proteins might help stabilize positioning of ribosome-bound tRNAs. In Acidobacterium capsulatum (strain ATCC 51196 / DSM 11244 / BCRC 80197 / JCM 7670 / NBRC 15755 / NCIMB 13165 / 161), this protein is Large ribosomal subunit protein uL5.